The chain runs to 468 residues: Beta-monoglucosyldiacylglycerol synthase (468 aa).

4 helical membrane passes run 51 to 71 (AALVLTIVWSGTIALHLVSWG), 72 to 92 (SIFILGLTTVLGIHALGVVFA), 358 to 378 (MLMFMLTMYILPTAAIPDLLM), and 387 to 407 (MLGPVTGLSVTMSVVGMFAGL).

The protein belongs to the glycosyltransferase 2 family. Mg(2+) serves as cofactor.

Its subcellular location is the membrane. It carries out the reaction a 1,2-diacyl-sn-glycerol + UDP-alpha-D-glucose = a 1,2-diacyl-3-O-(beta-D-glucopyranosyl)-sn-glycerol + UDP + H(+). Functionally, glucosyltransferase involved in the biosynthesis of the non-bilayer-forming membrane lipid beta-monoglucosyldiacylglycerol which contributes to regulate the properties and stability of the membrane. Catalyzes the transfer of a glucosyl residue from UDP-Glc to diacylglycerol (DAG) acceptor to form the corresponding beta-glucosyl-DAG (1,2-diacyl-3-O-(beta-D-glucopyranosyl)-sn-glycerol). It can only use UDP-Glc as sugar donor. Two types of DAG (dipalmitoyl-DAG (DPDAG) and 1-oleoyl-2-palmitoyl-DAG (OPDAG)) can be used as sugar acceptors, but OPDAG is preferred. The polypeptide is Beta-monoglucosyldiacylglycerol synthase (Nostoc sp. (strain PCC 7120 / SAG 25.82 / UTEX 2576)).